Consider the following 110-residue polypeptide: Ribonuclease P protein component 4 (110 aa).

Residues C65, C68, C94, and C97 each coordinate Zn(2+).

Belongs to the eukaryotic/archaeal RNase P protein component 4 family. As to quaternary structure, consists of a catalytic RNA component and at least 4-5 protein subunits. Zn(2+) serves as cofactor.

The protein localises to the cytoplasm. It carries out the reaction Endonucleolytic cleavage of RNA, removing 5'-extranucleotides from tRNA precursor.. In terms of biological role, part of ribonuclease P, a protein complex that generates mature tRNA molecules by cleaving their 5'-ends. This chain is Ribonuclease P protein component 4, found in Methanococcus maripaludis (strain C6 / ATCC BAA-1332).